The sequence spans 427 residues: Adenylosuccinate synthetase (427 aa).

Residues 12–18 (GDEGKGK) and 40–42 (GHT) contribute to the GTP site. Aspartate 13 functions as the Proton acceptor in the catalytic mechanism. The Mg(2+) site is built by aspartate 13 and glycine 40. IMP-binding positions include 13–16 (DEGK), 38–41 (NAGH), threonine 131, arginine 145, glutamine 226, threonine 241, and arginine 305. Histidine 41 (proton donor) is an active-site residue. Residue 301 to 307 (ATTGRKR) coordinates substrate. Residues arginine 307, 333 to 335 (KLD), and 415 to 417 (SVG) contribute to the GTP site.

This sequence belongs to the adenylosuccinate synthetase family. In terms of assembly, homodimer. Mg(2+) is required as a cofactor.

The protein localises to the cytoplasm. The catalysed reaction is IMP + L-aspartate + GTP = N(6)-(1,2-dicarboxyethyl)-AMP + GDP + phosphate + 2 H(+). It participates in purine metabolism; AMP biosynthesis via de novo pathway; AMP from IMP: step 1/2. Its function is as follows. Plays an important role in the de novo pathway of purine nucleotide biosynthesis. Catalyzes the first committed step in the biosynthesis of AMP from IMP. The protein is Adenylosuccinate synthetase of Oleidesulfovibrio alaskensis (strain ATCC BAA-1058 / DSM 17464 / G20) (Desulfovibrio alaskensis).